The following is a 413-amino-acid chain: Branched-chain-amino-acid aminotransferase 3, chloroplastic (413 aa).

The N-terminal 60 residues, 1–60 (MERAAILPSVNQNYLLCPSRAFSTRLHSSTRNLSPPSFASIKLQHSSSSVSSNGGISLTR), are a transit peptide targeting the chloroplast. Lys-259 bears the N6-(pyridoxal phosphate)lysine mark.

Belongs to the class-IV pyridoxal-phosphate-dependent aminotransferase family. Pyridoxal 5'-phosphate is required as a cofactor. As to expression, expressed in the phloem cells.

Its subcellular location is the plastid. It localises to the chloroplast. The enzyme catalyses L-leucine + 2-oxoglutarate = 4-methyl-2-oxopentanoate + L-glutamate. The catalysed reaction is L-isoleucine + 2-oxoglutarate = (S)-3-methyl-2-oxopentanoate + L-glutamate. It catalyses the reaction L-valine + 2-oxoglutarate = 3-methyl-2-oxobutanoate + L-glutamate. It carries out the reaction a 2-oxocarboxylate + L-methionine = 4-methylsulfanyl-2-oxobutanoate + an L-alpha-amino acid. It participates in amino-acid biosynthesis; L-isoleucine biosynthesis; L-isoleucine from 2-oxobutanoate: step 4/4. The protein operates within amino-acid biosynthesis; L-leucine biosynthesis; L-leucine from 3-methyl-2-oxobutanoate: step 4/4. It functions in the pathway amino-acid biosynthesis; L-valine biosynthesis; L-valine from pyruvate: step 4/4. With respect to regulation, inhibited by Ser- or Thr-derived imine. Converts 2-oxo acids to branched-chain amino acids. Acts on leucine, isoleucine and valine. Also involved in methionine chain elongation cycle of aliphatic glucosinolate formation. Catalyzes the conversion of 5-methylthiopentyl-2-oxo and 6-methylthiohexyl-2-oxo acids to their respective Met derivatives, homomethionine and dihomo-methionine, respectively. The sequence is that of Branched-chain-amino-acid aminotransferase 3, chloroplastic from Arabidopsis thaliana (Mouse-ear cress).